Consider the following 556-residue polypeptide: Zinc finger protein GLI1 (556 aa).

3 disordered regions span residues 57-83 (TEHP…KKRA), 133-178 (SLGY…TPAR), and 200-222 (KYPE…QDPL). Residues 135–148 (GYQNPPGQQKGQGQ) are compositionally biased toward low complexity. C2H2-type zinc fingers lie at residues 247–272 (TNCY…NNEH), 280–307 (FVCH…MRRH), 313–337 (HKCT…LRSH), 343–368 (YVCE…NRTH), and 374–399 (YICK…KTVH). The tract at residues 295-303 (KAQYMLVVH) is interaction with DNA. 2 interaction with DNA regions span residues 357–362 (ASDRAK) and 387–393 (DPSSLRK). Residues 387 to 492 (DPSSLRKHVK…VEMTGNTGGS (106 aa)) form a disordered region. A compositionally biased stretch (low complexity) spans 454–472 (SKPQPSPGGQSSCSSDRSP).

Belongs to the GLI C2H2-type zinc-finger protein family.

It localises to the cytoplasm. Its subcellular location is the nucleus. Acts as a transcriptional activator. Binds to the DNA consensus sequence 5'-GACCACCCA-3'. May regulate the transcription of specific genes during normal development. May play a role in craniofacial development and digital development, as well as development of the central nervous system and gastrointestinal tract. Mediates SHH signaling. Plays a role in cell proliferation and differentiation via its role in SHH signaling. This Gallus gallus (Chicken) protein is Zinc finger protein GLI1 (GLI1).